Reading from the N-terminus, the 519-residue chain is Probable FAD synthase (519 aa).

A molybdenum cofactor biosynthesis protein-like region spans residues 17–108 (AILVIGDEIL…TDQMQFSDEI (92 aa)). The segment at 328–485 (QIALSFNGGK…SLGGRDNTVK (158 aa)) is FAD synthase.

The protein in the N-terminal section; belongs to the MoaB/Mog family. This sequence in the C-terminal section; belongs to the PAPS reductase family. FAD1 subfamily. Mg(2+) serves as cofactor.

The catalysed reaction is FMN + ATP + H(+) = FAD + diphosphate. Its pathway is cofactor biosynthesis; FAD biosynthesis; FAD from FMN: step 1/1. In terms of biological role, catalyzes the adenylation of flavin mononucleotide (FMN) to form flavin adenine dinucleotide (FAD) coenzyme. In Caenorhabditis elegans, this protein is Probable FAD synthase.